A 220-amino-acid polypeptide reads, in one-letter code: 1-Cys peroxiredoxin A (220 aa).

A Thioredoxin domain is found at 4-165 (LTIGDTVPNL…VVRAVDALQT (162 aa)). Cysteine 46 acts as the Cysteine sulfenic acid (-SOH) intermediate in catalysis. The Bipartite nuclear localization signal signature appears at 195–218 (KEKFPQGFDTADLPSGKGYLRFTK).

This sequence belongs to the peroxiredoxin family. Prx6 subfamily.

Its subcellular location is the nucleus. It is found in the cytoplasm. The catalysed reaction is a hydroperoxide + [thioredoxin]-dithiol = an alcohol + [thioredoxin]-disulfide + H2O. In terms of biological role, thiol-specific peroxidase that catalyzes the reduction of hydrogen peroxide and organic hydroperoxides to water and alcohols, respectively. Seems to contribute to the inhibition of germination during stress. The polypeptide is 1-Cys peroxiredoxin A (Oryza sativa subsp. japonica (Rice)).